The primary structure comprises 739 residues: Phosphoribosylformylglycinamidine synthase subunit PurL (739 aa).

The active site involves H53. Residues Y56 and K95 each contribute to the ATP site. E97 lines the Mg(2+) pocket. Substrate contacts are provided by residues 98-101 and R120; that span reads SHNH. H99 serves as the catalytic Proton acceptor. D121 is a Mg(2+) binding site. Q244 serves as a coordination point for substrate. D274 is a Mg(2+) binding site. 318-320 contributes to the substrate binding site; the sequence is ESQ. 2 residues coordinate ATP: D501 and G538. N539 lines the Mg(2+) pocket. Position 541 (S541) interacts with substrate.

The protein belongs to the FGAMS family. Monomer. Part of the FGAM synthase complex composed of 1 PurL, 1 PurQ and 2 PurS subunits.

Its subcellular location is the cytoplasm. It carries out the reaction N(2)-formyl-N(1)-(5-phospho-beta-D-ribosyl)glycinamide + L-glutamine + ATP + H2O = 2-formamido-N(1)-(5-O-phospho-beta-D-ribosyl)acetamidine + L-glutamate + ADP + phosphate + H(+). It functions in the pathway purine metabolism; IMP biosynthesis via de novo pathway; 5-amino-1-(5-phospho-D-ribosyl)imidazole from N(2)-formyl-N(1)-(5-phospho-D-ribosyl)glycinamide: step 1/2. Part of the phosphoribosylformylglycinamidine synthase complex involved in the purines biosynthetic pathway. Catalyzes the ATP-dependent conversion of formylglycinamide ribonucleotide (FGAR) and glutamine to yield formylglycinamidine ribonucleotide (FGAM) and glutamate. The FGAM synthase complex is composed of three subunits. PurQ produces an ammonia molecule by converting glutamine to glutamate. PurL transfers the ammonia molecule to FGAR to form FGAM in an ATP-dependent manner. PurS interacts with PurQ and PurL and is thought to assist in the transfer of the ammonia molecule from PurQ to PurL. This Listeria monocytogenes serotype 4b (strain F2365) protein is Phosphoribosylformylglycinamidine synthase subunit PurL.